A 110-amino-acid chain; its full sequence is Large ribosomal subunit protein uL22 (110 aa).

The protein belongs to the universal ribosomal protein uL22 family. As to quaternary structure, part of the 50S ribosomal subunit.

Its function is as follows. This protein binds specifically to 23S rRNA; its binding is stimulated by other ribosomal proteins, e.g. L4, L17, and L20. It is important during the early stages of 50S assembly. It makes multiple contacts with different domains of the 23S rRNA in the assembled 50S subunit and ribosome. The globular domain of the protein is located near the polypeptide exit tunnel on the outside of the subunit, while an extended beta-hairpin is found that lines the wall of the exit tunnel in the center of the 70S ribosome. In Shewanella frigidimarina (strain NCIMB 400), this protein is Large ribosomal subunit protein uL22.